A 510-amino-acid polypeptide reads, in one-letter code: NAD(P)H-quinone oxidoreductase subunit 2 B, chloroplastic (510 aa).

A run of 13 helical transmembrane segments spans residues 24-44 (LLLFDGSFIFPECILIFGLIL), 59-79 (WFYFISSTSLVMSIAALLFRW), 99-119 (IFQFLILLCSTLCIPLSVEYI), 124-144 (MAITEFLLFVLTATLGGMFLC), 150-170 (ITIFVAPECFSLCSYLLSGYT), 184-204 (LLMGGASSSILVHGFSWLYGL), 229-249 (ISIALIFITVGIGFKLSLAPF), 295-315 (WHLLLEILAILSMILGNLIAI), 323-343 (MLAYSSIGQIGYVIIGIIVGD), 354-374 (YMLFYISMNLGTFARIVLFGL), 395-415 (ALSLALCLLSLGGLPPLAGFF), 418-438 (LHLFWCGWQAGLYFLVSIGLL), and 484-504 (MIVCVIASTIPGISMNPILAI).

This sequence belongs to the complex I subunit 2 family. In terms of assembly, NDH is composed of at least 16 different subunits, 5 of which are encoded in the nucleus.

The protein resides in the plastid. It is found in the chloroplast thylakoid membrane. The enzyme catalyses a plastoquinone + NADH + (n+1) H(+)(in) = a plastoquinol + NAD(+) + n H(+)(out). It carries out the reaction a plastoquinone + NADPH + (n+1) H(+)(in) = a plastoquinol + NADP(+) + n H(+)(out). Functionally, NDH shuttles electrons from NAD(P)H:plastoquinone, via FMN and iron-sulfur (Fe-S) centers, to quinones in the photosynthetic chain and possibly in a chloroplast respiratory chain. The immediate electron acceptor for the enzyme in this species is believed to be plastoquinone. Couples the redox reaction to proton translocation, and thus conserves the redox energy in a proton gradient. The protein is NAD(P)H-quinone oxidoreductase subunit 2 B, chloroplastic of Acorus calamus (Sweet flag).